A 347-amino-acid chain; its full sequence is Anthranilate phosphoribosyltransferase (347 aa).

Residues glycine 88, 91-92, threonine 96, 98-101, 116-124, and serine 128 each bind 5-phospho-alpha-D-ribose 1-diphosphate; these read GD, NIST, and KHGNRSVSS. Glycine 88 contributes to the anthranilate binding site. Serine 100 is a binding site for Mg(2+). An anthranilate-binding site is contributed by asparagine 119. Residue arginine 174 participates in anthranilate binding. Mg(2+)-binding residues include aspartate 232 and glutamate 233.

The protein belongs to the anthranilate phosphoribosyltransferase family. In terms of assembly, homodimer. The cofactor is Mg(2+).

It carries out the reaction N-(5-phospho-beta-D-ribosyl)anthranilate + diphosphate = 5-phospho-alpha-D-ribose 1-diphosphate + anthranilate. Its pathway is amino-acid biosynthesis; L-tryptophan biosynthesis; L-tryptophan from chorismate: step 2/5. Its function is as follows. Catalyzes the transfer of the phosphoribosyl group of 5-phosphorylribose-1-pyrophosphate (PRPP) to anthranilate to yield N-(5'-phosphoribosyl)-anthranilate (PRA). In Shewanella oneidensis (strain ATCC 700550 / JCM 31522 / CIP 106686 / LMG 19005 / NCIMB 14063 / MR-1), this protein is Anthranilate phosphoribosyltransferase.